A 295-amino-acid polypeptide reads, in one-letter code: tRNA(Ile)-lysidine synthase (295 aa).

10–15 contributes to the ATP binding site; it reads SGGPDS.

Belongs to the tRNA(Ile)-lysidine synthase family.

It localises to the cytoplasm. The enzyme catalyses cytidine(34) in tRNA(Ile2) + L-lysine + ATP = lysidine(34) in tRNA(Ile2) + AMP + diphosphate + H(+). Its function is as follows. Ligates lysine onto the cytidine present at position 34 of the AUA codon-specific tRNA(Ile) that contains the anticodon CAU, in an ATP-dependent manner. Cytidine is converted to lysidine, thus changing the amino acid specificity of the tRNA from methionine to isoleucine. This chain is tRNA(Ile)-lysidine synthase, found in Malacoplasma penetrans (strain HF-2) (Mycoplasma penetrans).